The sequence spans 277 residues: S-formylglutathione hydrolase FrmB (277 aa).

Active-site charge relay system residues include Ser-145, Asp-221, and His-254.

The protein belongs to the esterase D family.

It catalyses the reaction S-formylglutathione + H2O = formate + glutathione + H(+). Its function is as follows. Serine hydrolase involved in the detoxification of formaldehyde. Hydrolyzes S-formylglutathione to glutathione and formate. The chain is S-formylglutathione hydrolase FrmB (frmB) from Escherichia coli (strain ATCC 8739 / DSM 1576 / NBRC 3972 / NCIMB 8545 / WDCM 00012 / Crooks).